Here is a 284-residue protein sequence, read N- to C-terminus: ADP-polyphosphate phosphotransferase 3 (284 aa).

Composition is skewed to basic and acidic residues over residues 1–22 and 260–277; these read MDKHTDDRKKNNHWKAEDRKSA and DLGKRQKRPADFEGDTRR. Disordered stretches follow at residues 1 to 32 and 260 to 284; these read MDKHTDDRKKNNHWKAEDRKSAATEASETRSG and DLGKRQKRPADFEGDTRRRTVPNLF.

Belongs to the polyphosphate kinase 2 (PPK2) family. Class I subfamily.

It carries out the reaction [phosphate](n) + ATP = [phosphate](n+1) + ADP. The enzyme catalyses [phosphate](n) + GTP = [phosphate](n+1) + GDP. In terms of biological role, uses inorganic polyphosphate (polyP) as a donor to convert ADP to ATP. Can also convert GDP to GTP, with lower efficiency. The chain is ADP-polyphosphate phosphotransferase 3 from Rhizobium meliloti (strain 1021) (Ensifer meliloti).